The following is a 33-amino-acid chain: rho operon leader peptide (33 aa).

The span at 1–25 (MRSEQISGSSLNPSCRFSSAYSPVT) shows a compositional bias: polar residues. The disordered stretch occupies residues 1 to 33 (MRSEQISGSSLNPSCRFSSAYSPVTRQRKDMSR).

The polypeptide is rho operon leader peptide (rhoL) (Escherichia coli O157:H7).